The chain runs to 68 residues: DNA-directed RNA polymerase subunit Rpo10 (68 aa).

Zn(2+) is bound by residues cysteine 7, cysteine 10, cysteine 44, and cysteine 45.

It belongs to the archaeal Rpo10/eukaryotic RPB10 RNA polymerase subunit family. As to quaternary structure, part of the RNA polymerase complex. Zn(2+) serves as cofactor.

The protein localises to the cytoplasm. The catalysed reaction is RNA(n) + a ribonucleoside 5'-triphosphate = RNA(n+1) + diphosphate. DNA-dependent RNA polymerase (RNAP) catalyzes the transcription of DNA into RNA using the four ribonucleoside triphosphates as substrates. This is DNA-directed RNA polymerase subunit Rpo10 from Methanococcus maripaludis (strain C7 / ATCC BAA-1331).